The primary structure comprises 461 residues: Zinc finger protein ZFP2 (461 aa).

13 consecutive C2H2-type zinc fingers follow at residues 102–124 (YECN…QRIH), 130–152 (YKCN…QRIH), 158–180 (YKCN…QRTH), 186–208 (YQCK…ERIH), 214–236 (YKCN…QRTH), 242–264 (YECN…QRSH), 270–292 (YECS…QRNH), 298–320 (YKCN…QRLH), 326–348 (FECN…RRIH), 354–376 (YECM…QVIH), 382–404 (YECN…QRIH), 410–432 (YECD…QRTH), and 438–460 (YQCN…QRTH).

It belongs to the krueppel C2H2-type zinc-finger protein family.

The protein resides in the nucleus. Its function is as follows. Probable transcription factor involved in neuronal differentiation and/or phenotypic maintenance. The polypeptide is Zinc finger protein ZFP2 (ZFP2) (Homo sapiens (Human)).